The chain runs to 279 residues: Tryptophan synthase alpha chain (279 aa).

Catalysis depends on proton acceptor residues E50 and D61.

This sequence belongs to the TrpA family. In terms of assembly, tetramer of two alpha and two beta chains.

The enzyme catalyses (1S,2R)-1-C-(indol-3-yl)glycerol 3-phosphate + L-serine = D-glyceraldehyde 3-phosphate + L-tryptophan + H2O. The protein operates within amino-acid biosynthesis; L-tryptophan biosynthesis; L-tryptophan from chorismate: step 5/5. The alpha subunit is responsible for the aldol cleavage of indoleglycerol phosphate to indole and glyceraldehyde 3-phosphate. The sequence is that of Tryptophan synthase alpha chain from Brucella anthropi (strain ATCC 49188 / DSM 6882 / CCUG 24695 / JCM 21032 / LMG 3331 / NBRC 15819 / NCTC 12168 / Alc 37) (Ochrobactrum anthropi).